The following is a 603-amino-acid chain: Threonine--tRNA ligase (603 aa).

The tract at residues Asp-197–Pro-499 is catalytic. Residues Cys-296, His-347, and His-476 each contribute to the Zn(2+) site.

Belongs to the class-II aminoacyl-tRNA synthetase family. Homodimer. The cofactor is Zn(2+).

It localises to the cytoplasm. The catalysed reaction is tRNA(Thr) + L-threonine + ATP = L-threonyl-tRNA(Thr) + AMP + diphosphate + H(+). Functionally, catalyzes the attachment of threonine to tRNA(Thr) in a two-step reaction: L-threonine is first activated by ATP to form Thr-AMP and then transferred to the acceptor end of tRNA(Thr). Also edits incorrectly charged L-seryl-tRNA(Thr). This chain is Threonine--tRNA ligase, found in Synechocystis sp. (strain ATCC 27184 / PCC 6803 / Kazusa).